The chain runs to 178 residues: Heavy metal-associated isoprenylated plant protein 30 (178 aa).

Residues 45–108 (LQTIDLKVRM…AVRRAGKRAE (64 aa)) enclose the HMA domain. A metal cation contacts are provided by C56 and C59. C175 is subject to Cysteine methyl ester. C175 carries the S-farnesyl cysteine lipid modification. Positions 176–178 (SLM) are cleaved as a propeptide — removed in mature form.

This sequence belongs to the HIPP family. Interacts with ZHD3/HB21, ZHD11/HB29 and ZHD8/HB30.

Its function is as follows. Heavy-metal-binding protein. This chain is Heavy metal-associated isoprenylated plant protein 30, found in Arabidopsis thaliana (Mouse-ear cress).